Reading from the N-terminus, the 109-residue chain is Aquaporin-2 (109 aa).

Over 1–6 (SIAFSR) the chain is Cytoplasmic. The chain crosses the membrane as a helical span at residues 7–27 (AVFAEFLATLLFVFFGLGSAL). The Extracellular portion of the chain corresponds to 28 to 35 (NWPSALPS). A helical transmembrane segment spans residues 36 to 54 (TLQIAMAFGLGIGTLVQAL). At 55 to 59 (GHVSG) the chain is on the cytoplasmic side. The discontinuously helical intramembrane region spans 60 to 69 (AHINPAVTVA). Residues 63–65 (NPA) carry the NPA 1 motif. Residues 70–80 (CLVGCHVSFLR) are Cytoplasmic-facing. The helical transmembrane segment at 81 to 102 (AAFYVAAQLLGAVAGAALLHEI) threads the bilayer. At 103-109 (TPAEVRG) the chain is on the extracellular side.

Belongs to the MIP/aquaporin (TC 1.A.8) family. Homotetramer. In terms of processing, serine phosphorylation is necessary and sufficient for expression at the apical membrane. Endocytosis is not phosphorylation-dependent. Post-translationally, N-glycosylated.

It localises to the apical cell membrane. The protein localises to the basolateral cell membrane. It is found in the cell membrane. The protein resides in the cytoplasmic vesicle membrane. Its subcellular location is the golgi apparatus. It localises to the trans-Golgi network membrane. It catalyses the reaction H2O(in) = H2O(out). The enzyme catalyses glycerol(in) = glycerol(out). In terms of biological role, forms a water-specific channel that provides the plasma membranes of renal collecting duct with high permeability to water, thereby permitting water to move in the direction of an osmotic gradient. Plays an essential role in renal water homeostasis. Could also be permeable to glycerol. This is Aquaporin-2 from Oryctolagus cuniculus (Rabbit).